Consider the following 157-residue polypeptide: Crossover junction endodeoxyribonuclease RuvC (157 aa).

Residues aspartate 7, glutamate 67, and aspartate 139 contribute to the active site. 3 residues coordinate Mg(2+): aspartate 7, glutamate 67, and aspartate 139.

This sequence belongs to the RuvC family. As to quaternary structure, homodimer which binds Holliday junction (HJ) DNA. The HJ becomes 2-fold symmetrical on binding to RuvC with unstacked arms; it has a different conformation from HJ DNA in complex with RuvA. In the full resolvosome a probable DNA-RuvA(4)-RuvB(12)-RuvC(2) complex forms which resolves the HJ. It depends on Mg(2+) as a cofactor.

The protein localises to the cytoplasm. The catalysed reaction is Endonucleolytic cleavage at a junction such as a reciprocal single-stranded crossover between two homologous DNA duplexes (Holliday junction).. In terms of biological role, the RuvA-RuvB-RuvC complex processes Holliday junction (HJ) DNA during genetic recombination and DNA repair. Endonuclease that resolves HJ intermediates. Cleaves cruciform DNA by making single-stranded nicks across the HJ at symmetrical positions within the homologous arms, yielding a 5'-phosphate and a 3'-hydroxyl group; requires a central core of homology in the junction. The consensus cleavage sequence is 5'-(A/T)TT(C/G)-3'. Cleavage occurs on the 3'-side of the TT dinucleotide at the point of strand exchange. HJ branch migration catalyzed by RuvA-RuvB allows RuvC to scan DNA until it finds its consensus sequence, where it cleaves and resolves the cruciform DNA. This is Crossover junction endodeoxyribonuclease RuvC from Prochlorococcus marinus (strain MIT 9301).